The primary structure comprises 541 residues: Metal transporter Nramp1 (541 aa).

N-linked (GlcNAc...) asparagine glycosylation is present at Asn-17. 10 consecutive transmembrane segments (helical) span residues 45 to 65 (LFAY…PGNF), 78 to 98 (ELLW…SLAA), 122 to 142 (FILW…EVIG), 153 to 173 (IPVW…LALQ), 182 to 202 (LFIA…LGYA), 222 to 242 (GAAG…NLFL), 271 to 291 (GFAL…SGAV), 315 to 335 (FLLE…ALLA), 371 to 391 (SLAI…GAGK), and 392 to 412 (LIII…VPLL). Asn-426 is a glycosylation site (N-linked (GlcNAc...) asparagine). 2 helical membrane passes run 430 to 450 (ISSI…YYLA) and 465 to 485 (VAAI…LAGV). Residue Asn-511 is glycosylated (N-linked (GlcNAc...) asparagine).

Belongs to the NRAMP (TC 2.A.55) family.

It localises to the membrane. Probable divalent metal transporter. This is Metal transporter Nramp1 from Populus trichocarpa (Western balsam poplar).